Consider the following 64-residue polypeptide: Beta sliding clamp (64 aa).

Belongs to the beta sliding clamp family. As to quaternary structure, forms a ring-shaped head-to-tail homodimer around DNA which binds and tethers DNA polymerases and other proteins to the DNA. The DNA replisome complex has a single clamp-loading complex (3 tau and 1 each of delta, delta', psi and chi subunits) which binds 3 Pol III cores (1 core on the leading strand and 2 on the lagging strand) each with a beta sliding clamp dimer. Additional proteins in the replisome are other copies of gamma, psi and chi, Ssb, DNA helicase and RNA primase.

The protein resides in the cytoplasm. Functionally, confers DNA tethering and processivity to DNA polymerases and other proteins. Acts as a clamp, forming a ring around DNA (a reaction catalyzed by the clamp-loading complex) which diffuses in an ATP-independent manner freely and bidirectionally along dsDNA. Initially characterized for its ability to contact the catalytic subunit of DNA polymerase III (Pol III), a complex, multichain enzyme responsible for most of the replicative synthesis in bacteria; Pol III exhibits 3'-5' exonuclease proofreading activity. The beta chain is required for initiation of replication as well as for processivity of DNA replication. This is Beta sliding clamp (dnaN) from Actinobacillus pleuropneumoniae (Haemophilus pleuropneumoniae).